The chain runs to 1405 residues: DNA-directed RNA polymerase subunit beta' (1405 aa).

Zn(2+)-binding residues include Cys-65, Cys-67, Cys-80, and Cys-83. The Mg(2+) site is built by Asp-468, Asp-470, and Asp-472. Zn(2+) is bound by residues Cys-811, Cys-885, Cys-892, and Cys-895.

It belongs to the RNA polymerase beta' chain family. In terms of assembly, the RNAP catalytic core consists of 2 alpha, 1 beta, 1 beta' and 1 omega subunit. When a sigma factor is associated with the core the holoenzyme is formed, which can initiate transcription. The cofactor is Mg(2+). Zn(2+) serves as cofactor.

It catalyses the reaction RNA(n) + a ribonucleoside 5'-triphosphate = RNA(n+1) + diphosphate. In terms of biological role, DNA-dependent RNA polymerase catalyzes the transcription of DNA into RNA using the four ribonucleoside triphosphates as substrates. This is DNA-directed RNA polymerase subunit beta' from Azobacteroides pseudotrichonymphae genomovar. CFP2.